A 273-amino-acid chain; its full sequence is Formamidopyrimidine-DNA glycosylase (273 aa).

Catalysis depends on P2, which acts as the Schiff-base intermediate with DNA. E3 functions as the Proton donor in the catalytic mechanism. Residue K58 is the Proton donor; for beta-elimination activity of the active site. Positions 91 and 110 each coordinate DNA. Residues 238 to 272 (QVYGKTGQPCPRCASMIVKIKLGGRGTHLCPHCQK) form an FPG-type zinc finger. The Proton donor; for delta-elimination activity role is filled by R262.

This sequence belongs to the FPG family. Monomer. Zn(2+) serves as cofactor.

The enzyme catalyses Hydrolysis of DNA containing ring-opened 7-methylguanine residues, releasing 2,6-diamino-4-hydroxy-5-(N-methyl)formamidopyrimidine.. It carries out the reaction 2'-deoxyribonucleotide-(2'-deoxyribose 5'-phosphate)-2'-deoxyribonucleotide-DNA = a 3'-end 2'-deoxyribonucleotide-(2,3-dehydro-2,3-deoxyribose 5'-phosphate)-DNA + a 5'-end 5'-phospho-2'-deoxyribonucleoside-DNA + H(+). Functionally, involved in base excision repair of DNA damaged by oxidation or by mutagenic agents. Acts as a DNA glycosylase that recognizes and removes damaged bases. Has a preference for oxidized purines, such as 7,8-dihydro-8-oxoguanine (8-oxoG). Has AP (apurinic/apyrimidinic) lyase activity and introduces nicks in the DNA strand. Cleaves the DNA backbone by beta-delta elimination to generate a single-strand break at the site of the removed base with both 3'- and 5'-phosphates. The polypeptide is Formamidopyrimidine-DNA glycosylase (Streptococcus thermophilus (strain ATCC BAA-250 / LMG 18311)).